We begin with the raw amino-acid sequence, 343 residues long: Oxygen-dependent coproporphyrinogen-III oxidase (343 aa).

Ser-99 serves as a coordination point for substrate. The a divalent metal cation site is built by His-103 and His-113. The active-site Proton donor is His-113. Asn-115–Arg-117 provides a ligand contact to substrate. The a divalent metal cation site is built by His-147 and His-177. The segment at Tyr-267 to Glu-302 is important for dimerization.

The protein belongs to the aerobic coproporphyrinogen-III oxidase family. Homodimer. A divalent metal cation serves as cofactor.

The protein localises to the cytoplasm. It catalyses the reaction coproporphyrinogen III + O2 + 2 H(+) = protoporphyrinogen IX + 2 CO2 + 2 H2O. It functions in the pathway porphyrin-containing compound metabolism; protoporphyrin-IX biosynthesis; protoporphyrinogen-IX from coproporphyrinogen-III (O2 route): step 1/1. Involved in the heme and chlorophyll biosynthesis. Catalyzes the aerobic oxidative decarboxylation of propionate groups of rings A and B of coproporphyrinogen-III to yield the vinyl groups in protoporphyrinogen-IX. The sequence is that of Oxygen-dependent coproporphyrinogen-III oxidase from Prochlorococcus marinus (strain SARG / CCMP1375 / SS120).